Consider the following 193-residue polypeptide: dCTP deaminase (193 aa).

Residues 110–115 (RSSLAR), aspartate 128, 136–138 (VLE), tyrosine 171, lysine 178, and glutamine 182 contribute to the dCTP site. Glutamate 138 (proton donor/acceptor) is an active-site residue. The segment at 169 to 193 (RPYNRRQDAKYKDQQGAVASRIDKD) is disordered.

This sequence belongs to the dCTP deaminase family. In terms of assembly, homotrimer.

It catalyses the reaction dCTP + H2O + H(+) = dUTP + NH4(+). Its pathway is pyrimidine metabolism; dUMP biosynthesis; dUMP from dCTP (dUTP route): step 1/2. In terms of biological role, catalyzes the deamination of dCTP to dUTP. This chain is dCTP deaminase, found in Pectobacterium atrosepticum (strain SCRI 1043 / ATCC BAA-672) (Erwinia carotovora subsp. atroseptica).